A 440-amino-acid polypeptide reads, in one-letter code: Enolase 1 (440 aa).

His161 and Glu170 together coordinate substrate. Glu213 (proton donor) is an active-site residue. Asp248, Glu297, and Asp324 together coordinate Mg(2+). The substrate site is built by Glu297 and Asp324. Catalysis depends on Lys349, which acts as the Proton acceptor. Substrate contacts are provided by residues 376-379 (SHRS) and Lys400.

The protein belongs to the enolase family. In terms of assembly, homodimer. Requires Mg(2+) as cofactor.

It is found in the cytoplasm. It catalyses the reaction (2R)-2-phosphoglycerate = phosphoenolpyruvate + H2O. The protein operates within carbohydrate degradation; glycolysis; pyruvate from D-glyceraldehyde 3-phosphate: step 4/5. The polypeptide is Enolase 1 (ENO1) (Candida albicans (strain SC5314 / ATCC MYA-2876) (Yeast)).